The following is a 220-amino-acid chain: Urease accessory protein UreF (220 aa).

Belongs to the UreF family. UreD, UreF and UreG form a complex that acts as a GTP-hydrolysis-dependent molecular chaperone, activating the urease apoprotein by helping to assemble the nickel containing metallocenter of UreC. The UreE protein probably delivers the nickel.

The protein resides in the cytoplasm. Its function is as follows. Required for maturation of urease via the functional incorporation of the urease nickel metallocenter. This chain is Urease accessory protein UreF, found in Bordetella parapertussis (strain 12822 / ATCC BAA-587 / NCTC 13253).